A 402-amino-acid chain; its full sequence is Acyl-[acyl-carrier-protein] desaturase 3, chloroplastic (402 aa).

Disordered regions lie at residues 1 to 25 (MSLT…GGAS) and 38 to 66 (VGGI…THTL). The transit peptide at 1–32 (MSLTGCLPPRPPCSMRRRTSGGGASVSPVVVM) directs the protein to the chloroplast. Fe cation-binding residues include E139, E178, H181, E231, E264, and H267.

Belongs to the fatty acid desaturase type 2 family. In terms of assembly, homodimer. The cofactor is Fe(2+).

The protein localises to the plastid. It is found in the chloroplast. It functions in the pathway lipid metabolism; fatty acid metabolism. Its function is as follows. Introduces a cis double bond in the acyl chain of an acyl-[acyl-carrier protein]. This is Acyl-[acyl-carrier-protein] desaturase 3, chloroplastic from Oryza sativa subsp. indica (Rice).